The following is a 465-amino-acid chain: Neuromedin-K receptor (465 aa).

The Extracellular segment spans residues 1–84 (MATLPAAETW…TNQFVQPSWR (84 aa)). Residues N23, N50, and N73 are each glycosylated (N-linked (GlcNAc...) asparagine). A helical membrane pass occupies residues 85-107 (IALWSLAYGVVVAVAVLGNLIVI). The Cytoplasmic portion of the chain corresponds to 108–117 (WIILAHKRMR). Residues 118-139 (TVTNYFLVNLAFSDASMAAFNT) traverse the membrane as a helical segment. Over 140–159 (LVNFIYALHSEWYFGANYCR) the chain is Extracellular. Residues C158 and C233 are joined by a disulfide bond. Residues 160–181 (FQNFFPITAVFASIYSMTAIAV) form a helical membrane-spanning segment. The Cytoplasmic portion of the chain corresponds to 182 to 201 (DRYMAIIDPLKPRLSATATK). A helical transmembrane segment spans residues 202–222 (IVIGSIWILAFLLAFPQCLYS). Residues 223-245 (KTKVMPGRTLCFVQWPEGPKQHF) lie on the Extracellular side of the membrane. The helical transmembrane segment at 246-270 (TYHIIVIILVYCFPLLIMGITYTIV) threads the bilayer. Over 271–299 (GITLWGGEIPGDTCDKYHEQLKAKRKVVK) the chain is Cytoplasmic. Residues 300 to 321 (MMIIVVMTFAICWLPYHIYFIL) form a helical membrane-spanning segment. At 322–334 (TAIYQQLNRWKYI) the chain is on the extracellular side. The chain crosses the membrane as a helical span at residues 335–359 (QQVYLASFWLAMSSTMYNPIIYCCL). Over 360–465 (NKRFRAGFKR…SPYTSVDEYS (106 aa)) the chain is Cytoplasmic. A lipid anchor (S-palmitoyl cysteine) is attached at C374. A disordered region spans residues 415–465 (PNDADTTRSSRKKRATPRDPSFNGCSRRNSKSASATSSFISSPYTSVDEYS). Over residues 445-465 (KSASATSSFISSPYTSVDEYS) the composition is skewed to low complexity.

Belongs to the G-protein coupled receptor 1 family. Post-translationally, the anchoring of this receptor to the plasma membrane is probably mediated by the palmitoylation of a cysteine residue.

It localises to the cell membrane. Its function is as follows. This is a receptor for the tachykinin neuropeptide neuromedin-K (neurokinin B). It is associated with G proteins that activate a phosphatidylinositol-calcium second messenger system. The rank order of affinity of this receptor to tachykinins is: neuromedin-K &gt; substance K &gt; substance P. This Homo sapiens (Human) protein is Neuromedin-K receptor (TACR3).